Consider the following 190-residue polypeptide: Shikimate kinase (190 aa).

14 to 19 (GAGKST) is an ATP binding site. Residue S18 participates in Mg(2+) binding. The substrate site is built by D36, R60, and G82. R120 contacts ATP. Residue R139 participates in substrate binding.

The protein belongs to the shikimate kinase family. As to quaternary structure, monomer. The cofactor is Mg(2+).

It localises to the cytoplasm. The enzyme catalyses shikimate + ATP = 3-phosphoshikimate + ADP + H(+). It participates in metabolic intermediate biosynthesis; chorismate biosynthesis; chorismate from D-erythrose 4-phosphate and phosphoenolpyruvate: step 5/7. In terms of biological role, catalyzes the specific phosphorylation of the 3-hydroxyl group of shikimic acid using ATP as a cosubstrate. The chain is Shikimate kinase from Thioalkalivibrio sulfidiphilus (strain HL-EbGR7).